Here is a 523-residue protein sequence, read N- to C-terminus: WD repeat-containing protein YPL247C (523 aa).

The segment at 1 to 64 is disordered; sequence MDPFHNGNKR…TTNGGNSKRN (64 aa). Residues 9-40 show a composition bias toward polar residues; sequence KRSSISFGSSQRQPYNKNNYLSGTNGPSSAAQ. S47 is subject to Phosphoserine. Positions 52–64 are enriched in low complexity; it reads SGNTTNGGNSKRN. S65 is modified (phosphoserine). WD repeat units lie at residues 173–213, 241–281, 285–325, and 392–432; these read DVVY…RQFQ, GTFP…YVKT, AHDS…HSTI, and GHGS…MEIN. A disordered region spans residues 436-472; that stretch reads SKSPSIHGTSLEDPDGDTEMTDGGAGSGLNEDPLSLN.

It belongs to the WD repeat WDR68 family.

It is found in the cytoplasm. The protein localises to the nucleus. In Saccharomyces cerevisiae (strain ATCC 204508 / S288c) (Baker's yeast), this protein is WD repeat-containing protein YPL247C.